The chain runs to 1359 residues: NPC1-like intracellular cholesterol transporter 1 (1359 aa).

Positions 1–21 (MAEAGLRGWLLWALLLRLAQS) are cleaved as a signal peptide. At 22–284 (EPYTTIHQPG…TFYLGQMPGS (263 aa)) the chain is on the extracellular side. Intrachain disulfides connect C33/C90, C39/C57, C78/C125, C91/C129, C113/C254, C116/C172, C189/C197, C243/C259, and C256/C263. N54 carries N-linked (GlcNAc...) asparagine glycosylation. N-linked (GlcNAc...) asparagine glycans are attached at residues N132 and N138. The N-linked (GlcNAc...) asparagine glycan is linked to N244. The chain crosses the membrane as a helical span at residues 285–305 (LVLIIILCSVFAVVTILLVGF). Residues 306 to 351 (RVAPARDKSKMVDPKKGTSLSDKLSFSTHTLLGQFFQGWGTWVASW) are Cytoplasmic-facing. The chain crosses the membrane as a helical span at residues 352–372 (PLTILVLSVIPVVALAAGLVF). The Extracellular segment spans residues 373-632 (TELTTDPVEL…DEINRTTAED (260 aa)). N416, N431, N464, N479, N497, and N506 each carry an N-linked (GlcNAc...) asparagine glycan. A disulfide bridge connects residues C471 and C485. A disulfide bond links C525 and C542. N626 carries an N-linked (GlcNAc...) asparagine glycan. The SSD domain occupies 632-797 (DLPIFATSYI…MSAFVALLSL (166 aa)). The helical transmembrane segment at 633–653 (LPIFATSYIVIFLYISLALGS) threads the bilayer. The Cytoplasmic segment spans residues 654-666 (YSSWSRVMVDSKA). The helical transmembrane segment at 667-687 (TLGLGGVAVVLGAVMAAMGFF) threads the bilayer. Topologically, residues 688–696 (SYLGIRSSL) are extracellular. The helical transmembrane segment at 697–717 (VILQVVPFLVLSVGADNIFIF) threads the bilayer. At 718–742 (VLEYQRLPRRPGEPREVHIGRALGR) the chain is on the cytoplasmic side. Residues 743–763 (VAPSMLLCSLSEAICFFLGAL) traverse the membrane as a helical segment. Topologically, residues 764-776 (TPMPAVRTFALTS) are extracellular. The helical transmembrane segment at 777–797 (GLAVILDFLLQMSAFVALLSL) threads the bilayer. The Cytoplasmic segment spans residues 798–846 (DSKRQEASRLDVCCCVKPQELPPPGQGEGLLLGFFQKAYAPFLLHWITR). The helical transmembrane segment at 847–867 (GVVLLLFLALFGVSLYSMCHI) threads the bilayer. At 868 to 1139 (SVGLDQELAL…EQYLTILPEG (272 aa)) the chain is on the extracellular side. Intrachain disulfides connect C920/C925, C966/C1024, and C980/C989. Residues 1140-1160 (LFMLSLCLVPTFAVSCLLLGL) traverse the membrane as a helical segment. Topologically, residues 1161-1168 (DLRSGLLN) are cytoplasmic. A helical transmembrane segment spans residues 1169–1189 (LLSIVMILVDTVGFMALWGIS). At 1190–1191 (YN) the chain is on the extracellular side. Residues 1192 to 1212 (AVSLINLVSAVGMSVEFVSHI) traverse the membrane as a helical segment. The Cytoplasmic portion of the chain corresponds to 1213–1236 (TRSFAISTKPTWLERAKEATISMG). A helical membrane pass occupies residues 1237 to 1257 (SAVFAGVAMTNLPGILVLGLA). Residues 1258–1268 (KAQLIQIFFFR) lie on the Extracellular side of the membrane. Residues 1269 to 1289 (LNLLITLLGLLHGLVFLPVIL) form a helical membrane-spanning segment. The Cytoplasmic portion of the chain corresponds to 1290–1359 (SYVGPDVNPA…NFLPNNGRQF (70 aa)).

This sequence belongs to the patched family. Interacts with RAB11A, MYO5B and RAB11FIP2. Interaction with RAB11A, MYO5B and RAB11FIP2 is required for proper transport to the plasma membrane upon cholesterol depletion. Interacts with NPC2. Interacts with LIMA1. Post-translationally, highly glycosylated. As to expression, widely expressed. Expressed in liver. Also expressed in small intestine, pancreas, kidney, lung, pancreas, spleen, heart, gall bladder, brain, testis, stomach and muscle.

It is found in the apical cell membrane. It localises to the cell membrane. Its subcellular location is the cytoplasmic vesicle membrane. It catalyses the reaction cholesterol(in) = cholesterol(out). The enzyme catalyses sitosterol(out) = sitosterol(in). Functionally, plays a major role in cholesterol homeostasis. Critical for the uptake of cholesterol across the plasma membrane of the intestinal enterocyte. Involved in plant sterol absorption, it transports sitosterol, although at lower rates than cholesterol. Is the direct molecular target of ezetimibe, a drug that inhibits cholesterol absorption and is approved for the treatment of hypercholesterolemia. May have a function in the transport of multiple lipids and their homeostasis, thereby influencing lipid metabolism regulation. May be involved in caveolin trafficking from the plasma membrane. In addition, acts as a negative regulator of NPC2 and down-regulates its expression and secretion by inhibiting its maturation and accelerating its degradation. The polypeptide is NPC1-like intracellular cholesterol transporter 1 (Homo sapiens (Human)).